The following is a 556-amino-acid chain: uncharacterized protein (556 aa).

Disordered stretches follow at residues 1-40 (MSNS…TNEN), 80-243 (NTTQ…KQSW), 278-324 (YDSD…SSLP), 363-391 (RTKQ…KFVD), and 422-525 (DSKQ…ENSA). Residues 7–25 (NNNNNTNNNNNNNNNNNGN) are compositionally biased toward low complexity. The span at 30–40 (EEPDDDSTNEN) shows a compositional bias: acidic residues. Composition is skewed to low complexity over residues 80 to 133 (NTTQ…GTRS) and 164 to 181 (NDNN…NDSN). Over residues 182–192 (IVDDDEDEEEF) the composition is skewed to acidic residues. Residues 207–226 (STSSPSSTSSPIVSPQTQTS) are compositionally biased toward low complexity. A compositionally biased stretch (polar residues) spans 227 to 243 (KLESSMDVSPSSGKQSW). Low complexity-rich tracts occupy residues 292–322 (NNSS…NSSS), 369–388 (KVQQ…NNNK), and 425–525 (QQNV…ENSA). Residues 528 to 548 (GSFIKNAVIFIFILLLMVVGF) form a helical membrane-spanning segment.

The protein resides in the membrane. This is an uncharacterized protein from Dictyostelium discoideum (Social amoeba).